The primary structure comprises 137 residues: Large ribosomal subunit protein uL16 (137 aa).

This sequence belongs to the universal ribosomal protein uL16 family. As to quaternary structure, part of the 50S ribosomal subunit.

Its function is as follows. Binds 23S rRNA and is also seen to make contacts with the A and possibly P site tRNAs. In Francisella tularensis subsp. tularensis (strain FSC 198), this protein is Large ribosomal subunit protein uL16.